The chain runs to 1150 residues: BAI1-associated protein 3 (1150 aa).

The disordered stretch occupies residues 22–44 (RRKTEQEPEVTNSQEPPTGAWKP). The C2 1 domain occupies 139–298 (SSEEHMEAIM…VKSARANGTA (160 aa)). Ca(2+) contacts are provided by Asp174 and Asp180. The segment at 193–214 (APQEPSGQKEQRFGFRKGSKRS) is disordered. Ca(2+)-binding residues include Asp258 and Asp260. One can recognise an MHD1 domain in the interval 626 to 747 (FELYLTLADT…EASLFYTELL (122 aa)). The 109-residue stretch at 851-959 (DEAVAPLLKY…CSTRECIEQF (109 aa)) folds into the MHD2 domain. In terms of domain architecture, C2 2 spans 973–1099 (RFGRLTVRCH…GIARPHVGGG (127 aa)). Positions 1003, 1004, 1010, 1068, 1070, 1073, and 1076 each coordinate Ca(2+).

The protein belongs to the unc-13 family. As to quaternary structure, interacts with ADGRB1, this interaction is direct. Interacts with endosomal SNARE proteins VAMP3, VAMP4, STX6 and STX16; this interaction is increased in the presence of calcium. Ca(2+) serves as cofactor. In terms of tissue distribution, prominently expressed in brain structures including hypothalamus, amygdala, stria terminalis and periaqueductal gray (at protein level). Expressed in nonneuronal tissues, including placenta, lung, pancreas, spleen, and testes. Within placenta, expression is restricted to the syncytiotrophoblasts.

The protein localises to the cytoplasm. The protein resides in the cytosol. It localises to the recycling endosome membrane. Its subcellular location is the late endosome membrane. It is found in the golgi apparatus. The protein localises to the trans-Golgi network membrane. The protein resides in the cell membrane. Functions in endosome to Golgi retrograde transport. In response to calcium influx, may interact with SNARE fusion receptors and membrane phospholipids to mediate endosome fusion with the trans-Golgi network. By promoting the recycling of secretory vesicle transmembrane proteins, it indirectly controls dense-core secretory vesicle biogenesis, maturation and their ability to mediate the constitutive and regulated secretion of neurotransmitters and hormones. May regulate behavior and food intake by controlling calcium-stimulated exocytosis of neurotransmitters including NPY and serotonin and hormones like insulin. Proposed to play a role in hypothalamic neuronal firing by modulating gamma-aminobutyric acid (GABA)ergic inhibitory neurotransmission. This is BAI1-associated protein 3 from Mus musculus (Mouse).